The following is a 488-amino-acid chain: R3H and coiled-coil domain-containing protein 1 (488 aa).

The region spanning 16–81 (NDFVHRVQEE…KRRTVICHLD (66 aa)) is the R3H domain. 2 disordered regions span residues 87 to 180 (SDGP…GDAE) and 195 to 322 (KSPD…DADH). Residues 114–125 (GAAAGPRGAPAG) show a composition bias toward low complexity. S232 is modified (phosphoserine). A coiled-coil region spans residues 244-321 (SHGMRSLVDQ…EEDEDEADAD (78 aa)). The segment covering 252–265 (DQEEEEIEGEEEEK) has biased composition (acidic residues). Composition is skewed to basic and acidic residues over residues 266-280 (VDEK…KERV) and 287-301 (TDAQ…GERM). The segment covering 302–319 (DEGEDKVDAEEEDEDEAD) has biased composition (acidic residues).

The polypeptide is R3H and coiled-coil domain-containing protein 1 (Mus musculus (Mouse)).